The following is a 311-amino-acid chain: Solute carrier family 25 member 48 (311 aa).

3 Solcar repeats span residues 3–86 (SFQL…TQRF), 101–205 (RTLS…LSEW), and 214–301 (PSPC…SLQA). 6 helical membrane-spanning segments follow: residues 9-29 (FAAG…LDTV), 61-81 (GMSF…GVFS), 107-127 (LLAS…VDLI), 189-209 (VPGY…ITPE), 217-237 (CAVW…ATPM), and 277-295 (ITVN…FLGY).

It belongs to the mitochondrial carrier (TC 2.A.29) family.

Its subcellular location is the mitochondrion inner membrane. The protein is Solute carrier family 25 member 48 (SLC25A48) of Homo sapiens (Human).